The primary structure comprises 199 residues: uncharacterized protein (199 aa).

3 consecutive transmembrane segments (helical) span residues 27-47, 55-75, and 172-192; these read LIKI…PILA, LLTL…VAAL, and LLLL…VLLL.

Its subcellular location is the cell membrane. This is an uncharacterized protein from Synechocystis sp. (strain ATCC 27184 / PCC 6803 / Kazusa).